Consider the following 316-residue polypeptide: Methionyl-tRNA formyltransferase (316 aa).

Residue 112–115 coordinates (6S)-5,6,7,8-tetrahydrofolate; the sequence is SLLP.

This sequence belongs to the Fmt family.

The enzyme catalyses L-methionyl-tRNA(fMet) + (6R)-10-formyltetrahydrofolate = N-formyl-L-methionyl-tRNA(fMet) + (6S)-5,6,7,8-tetrahydrofolate + H(+). Its function is as follows. Attaches a formyl group to the free amino group of methionyl-tRNA(fMet). The formyl group appears to play a dual role in the initiator identity of N-formylmethionyl-tRNA by promoting its recognition by IF2 and preventing the misappropriation of this tRNA by the elongation apparatus. This Flavobacterium psychrophilum (strain ATCC 49511 / DSM 21280 / CIP 103535 / JIP02/86) protein is Methionyl-tRNA formyltransferase.